The sequence spans 549 residues: Capsid vertex component 2 (549 aa).

The tract at residues 1 to 54 (MLTSERSYLRYPKNRRWTEAGRFWAPHPENVLFIHKPTMEETRRVALGLRSQLV) is interaction with major capsid protein/MCP.

Belongs to the herpesviridae CVC2 protein family. Heterodimerizes with CVC1. Interacts with major capsid protein/MCP and triplex capsid protein 1/TRX1 at the pentamer vertices. Interacts with the large tegument protein/LTP.

The protein resides in the virion. It localises to the host nucleus. Capsid vertex-specific component that plays a role during viral DNA encapsidation, assuring correct genome cleavage and presumably stabilizing capsids that contain full-length viral genomes. Participates in the interaction between the capsid and the tegument through interaction with the large tegument protein/LTP. The chain is Capsid vertex component 2 from Human herpesvirus 8 type P (isolate GK18) (HHV-8).